The primary structure comprises 184 residues: Cytidylate kinase (184 aa).

8–16 (GQPGSGKTT) lines the ATP pocket.

This sequence belongs to the cytidylate kinase family. Type 2 subfamily.

The protein localises to the cytoplasm. It catalyses the reaction CMP + ATP = CDP + ADP. It carries out the reaction dCMP + ATP = dCDP + ADP. This is Cytidylate kinase from Pyrobaculum neutrophilum (strain DSM 2338 / JCM 9278 / NBRC 100436 / V24Sta) (Thermoproteus neutrophilus).